The following is a 424-amino-acid chain: Probable methyltransferase EP424R (424 aa).

Residues 103–315 (QIVTNAWLKM…TYIVGKNRLR (213 aa)) form the Adrift-type SAM-dependent 2'-O-MTase domain. S-adenosyl-L-methionine contacts are provided by glycine 135 and aspartate 228. Lysine 268 (proton acceptor) is an active-site residue.

It localises to the virion. The chain is Probable methyltransferase EP424R from Ornithodoros (relapsing fever ticks).